Reading from the N-terminus, the 569-residue chain is ATP-dependent RNA helicase HAS1 (569 aa).

Disordered stretches follow at residues 1–57 (MSKG…DQNF) and 71–110 (FKEE…FEDL). A compositionally biased stretch (acidic residues) spans 34 to 45 (EEEISSDEEEAD). A compositionally biased stretch (basic and acidic residues) spans 71–85 (FKEEKKQKKNKEPKT). The Q motif signature appears at 105–133 (DKFEDLGLSEPTMRAIKDMGFEKMTKVQE). A Helicase ATP-binding domain is found at 136–312 (IPPLLAGRDV…RISLRAGPLY (177 aa)). 149-156 (AKTGSGKT) provides a ligand contact to ATP. Residues 259–262 (DEAD) carry the DEAD box motif. A Helicase C-terminal domain is found at 326 to 496 (GLEQGYVTCD…NIQSQLTKLI (171 aa)).

Belongs to the DEAD box helicase family. DDX18/HAS1 subfamily. As to quaternary structure, associates in the nucleolus with the 60S and pre-60S ribosomal subunits.

The protein localises to the nucleus. It is found in the nucleolus. It catalyses the reaction ATP + H2O = ADP + phosphate + H(+). Functionally, ATP-dependent RNA helicase involved in 40S ribosomal subunit biogenesis. Required for the processing and cleavage of 35S pre-rRNA at sites A0, A1, and A2, leading to mature 18S rRNA. The chain is ATP-dependent RNA helicase HAS1 (HAS1) from Meyerozyma guilliermondii (strain ATCC 6260 / CBS 566 / DSM 6381 / JCM 1539 / NBRC 10279 / NRRL Y-324) (Yeast).